Consider the following 150-residue polypeptide: UPF0336 protein SAV_4901 (150 aa).

The MaoC-like domain maps to 8-126 (VGRSYPPTDP…GNDVVDVRGE (119 aa)).

This sequence belongs to the UPF0336 family.

The protein is UPF0336 protein SAV_4901 of Streptomyces avermitilis (strain ATCC 31267 / DSM 46492 / JCM 5070 / NBRC 14893 / NCIMB 12804 / NRRL 8165 / MA-4680).